A 753-amino-acid polypeptide reads, in one-letter code: Probable tubulin--tyrosine ligase PBY1 (753 aa).

In terms of domain architecture, TTL spans 343–734 (MEYIYKPLTH…PIFNENRNKT (392 aa)).

This sequence belongs to the tubulin--tyrosine ligase family. Mg(2+) serves as cofactor. It depends on K(+) as a cofactor.

The protein localises to the cytoplasm. The protein resides in the P-body. The catalysed reaction is C-terminal L-alpha-aminoacyl-L-glutamyl-L-glutamyl-[tubulin] + L-tyrosine + ATP = C-terminal L-alpha-aminoacyl-L-glutamyl-L-glutamyl-L-tyrosyl-[tubulin] + ADP + phosphate + H(+). Functionally, probable P-body-associated tubulin--tyrosine ligase. In Saccharomyces cerevisiae (strain ATCC 204508 / S288c) (Baker's yeast), this protein is Probable tubulin--tyrosine ligase PBY1 (PBY1).